A 361-amino-acid chain; its full sequence is Mannonate dehydratase 1 (361 aa).

It belongs to the mannonate dehydratase family. The cofactor is Fe(2+). It depends on Mn(2+) as a cofactor.

It catalyses the reaction D-mannonate = 2-dehydro-3-deoxy-D-gluconate + H2O. It functions in the pathway carbohydrate metabolism; pentose and glucuronate interconversion. Functionally, catalyzes the dehydration of D-mannonate. In Halalkalibacterium halodurans (strain ATCC BAA-125 / DSM 18197 / FERM 7344 / JCM 9153 / C-125) (Bacillus halodurans), this protein is Mannonate dehydratase 1 (uxuA1).